Consider the following 108-residue polypeptide: Protein YcgL (108 aa).

In terms of domain architecture, YcgL spans 12 to 96; sequence MFCVIYRSSK…PPEDLLKQHL (85 aa).

This chain is Protein YcgL, found in Escherichia coli O127:H6 (strain E2348/69 / EPEC).